The primary structure comprises 125 residues: MSKSTLEQPEYVKERLESLAEVDRQLCSMLQEASQVAFTYGEVLRGNAMMKPQFQEHVSAFYSTLDNASGKLKKEIELLDENVGNRLLPINVNKKALGQDDDKLKEQMETLKEFLKTDNEETSTS.

This sequence belongs to the Mediator complex subunit 11 family. As to quaternary structure, component of the Mediator complex.

It localises to the nucleus. Component of the Mediator complex, a coactivator involved in the regulated transcription of nearly all RNA polymerase II-dependent genes. Mediator functions as a bridge to convey information from gene-specific regulatory proteins to the basal RNA polymerase II transcription machinery. Mediator is recruited to promoters by direct interactions with regulatory proteins and serves as a scaffold for the assembly of a functional pre-initiation complex with RNA polymerase II and the general transcription factors. This is Mediator of RNA polymerase II transcription subunit 11 (MED11) from Candida glabrata (strain ATCC 2001 / BCRC 20586 / JCM 3761 / NBRC 0622 / NRRL Y-65 / CBS 138) (Yeast).